Consider the following 133-residue polypeptide: UPF0292 protein TK1411 (133 aa).

The Toprim domain maps to Glu20–Leu100. Mg(2+) is bound by residues Glu26, Asp69, and Asp71.

It belongs to the UPF0292 family. Mg(2+) serves as cofactor.

The polypeptide is UPF0292 protein TK1411 (Thermococcus kodakarensis (strain ATCC BAA-918 / JCM 12380 / KOD1) (Pyrococcus kodakaraensis (strain KOD1))).